The following is a 219-amino-acid chain: Chalcone--flavanone isomerase (219 aa).

Substrate-binding residues include Thr50, Asn115, and Ser188.

The protein belongs to the chalcone isomerase family.

The enzyme catalyses a chalcone = a flavanone.. The protein operates within secondary metabolite biosynthesis; flavonoid biosynthesis. Catalyzes the intramolecular cyclization of bicyclic chalcones into tricyclic (S)-flavanones. Responsible for the isomerization of 4,2',4',6'-tetrahydroxychalcone (also termed chalcone) into naringenin. This Clitoria ternatea (Butterfly pea) protein is Chalcone--flavanone isomerase (CHI).